Here is a 522-residue protein sequence, read N- to C-terminus: Neuropeptide FF receptor 2 (522 aa).

The Extracellular portion of the chain corresponds to 1-147 (MNSFFGTPAA…NYYLHQPQVA (147 aa)). Positions 25–49 (KEAGRERRALSVQQRGGPAWSGSLE) are disordered. Residues N110, N122, and N133 are each glycosylated (N-linked (GlcNAc...) asparagine). A helical transmembrane segment spans residues 148–168 (AIFIISYFLIFFLCMMGNTVV). At 169–184 (CFIVMRNKHMHTVTNL) the chain is on the cytoplasmic side. The chain crosses the membrane as a helical span at residues 185–205 (FILNLAISDLLVGIFCMPITL). Over 206 to 221 (LDNIIAGWPFGNTMCK) the chain is Extracellular. Cysteines 220 and 308 form a disulfide. A helical membrane pass occupies residues 222 to 242 (ISGLVQGISVAASVFTLVAIA). Residues 243 to 262 (VDRFQCVVYPFKPKLTIKTA) lie on the Cytoplasmic side of the membrane. Residues 263 to 283 (FVIIMIIWVLAITIMSPSAVM) traverse the membrane as a helical segment. The Extracellular segment spans residues 284–319 (LHVQEEKYYRVRLNSQNKTSPVYWCREDWPNQEMRK). A glycan (N-linked (GlcNAc...) asparagine) is linked at N300. Residues 320-340 (IYTTVLFANIYLAPLSLIVIM) form a helical membrane-spanning segment. The Cytoplasmic segment spans residues 341-377 (YGRIGISLFRAAVPHTGRKNQEQWHVVSRKKQKIIKM). Residues 378 to 398 (LLIVALLFILSWLPLWTLMML) traverse the membrane as a helical segment. The Extracellular segment spans residues 399–413 (SDYADLSPNELQIIN). The chain crosses the membrane as a helical span at residues 414 to 434 (IYIYPFAHWLAFGNSSVNPII). Residues 435–522 (YGFFNENFRR…LKETTNSSEI (88 aa)) are Cytoplasmic-facing.

This sequence belongs to the G-protein coupled receptor 1 family. Isoform 1 is abundant in placenta. Relatively highly expressed in thymus, testis, and small intestine. Expressed at low levels in several tissues including spleen, prostate, brain, heart, ovary, colon, kidney, lung, liver and pancreas and not expressed in skeletal muscle and leukocytes. Isoform 2 expression is highest in placenta (but at relatively low level compared to isoform 1). Very low level of expression in numerous tissues including adipose tissue and many brain regions. Isoform 3 is expressed in brain and heart and, at lower levels, in kidney, liver, lung and pancreas.

It is found in the cell membrane. Its function is as follows. Receptor for NPAF (A-18-F-amide) and NPFF (F-8-F-amide) neuropeptides, also known as morphine-modulating peptides. Can also be activated by a variety of naturally occurring or synthetic FMRF-amide like ligands. This receptor mediates its action by association with G proteins that activate a phosphatidylinositol-calcium second messenger system. This is Neuropeptide FF receptor 2 from Homo sapiens (Human).